The primary structure comprises 180 residues: O-acetyl-ADP-ribose deacetylase (180 aa).

The Macro domain occupies 1-175 (MSGRINVVQG…LYQRLLGQYD (175 aa)). Substrate is bound by residues 11 to 12 (DI), asparagine 25, 33 to 35 (GVD), and 122 to 126 (STGIY). The active-site Proton acceptor is the aspartate 35.

It belongs to the MacroD-type family. YmdB subfamily. As to quaternary structure, homodimer. Interacts with RNase III.

The enzyme catalyses 3''-O-acetyl-ADP-D-ribose + H2O = ADP-D-ribose + acetate + H(+). It carries out the reaction 2''-O-acetyl-ADP-D-ribose + H2O = ADP-D-ribose + acetate + H(+). Deacetylates O-acetyl-ADP ribose to yield ADP-ribose and free acetate. Down-regulates ribonuclease 3 (RNase III) activity. Acts by interacting directly with the region of the ribonuclease that is required for dimerization/activation. The sequence is that of O-acetyl-ADP-ribose deacetylase from Cronobacter sakazakii (strain ATCC BAA-894) (Enterobacter sakazakii).